A 148-amino-acid chain; its full sequence is Lysozyme-like protein 1 (148 aa).

A signal peptide spans Met1 to Ser19. A C-type lysozyme domain is found at Lys20–Ser148. Intrachain disulfides connect Cys25/Cys145, Cys49/Cys133, Cys83/Cys98, and Cys94/Cys112. Glu54 is a catalytic residue. Asn58 carries N-linked (GlcNAc...) asparagine glycosylation. Asp71 is an active-site residue.

This sequence belongs to the glycosyl hydrolase 22 family. As to quaternary structure, monomer.

It localises to the secreted. The enzyme catalyses Hydrolysis of (1-&gt;4)-beta-linkages between N-acetylmuramic acid and N-acetyl-D-glucosamine residues in a peptidoglycan and between N-acetyl-D-glucosamine residues in chitodextrins.. The sequence is that of Lysozyme-like protein 1 (Lyzl1) from Mus musculus (Mouse).